The primary structure comprises 128 residues: MRHRKSGRHLSRTSSHRKAMFQNMAVSLFEHELIKTTLPKAKELRRVAEPLITLAKEDSVANRRLAFDRTRSKEIVGKLFNDLGKRYATRQGGYLRILKCGFRAGDNAPMAYVELVDRPIGGSVEAAE.

The protein belongs to the bacterial ribosomal protein bL17 family. As to quaternary structure, part of the 50S ribosomal subunit. Contacts protein L32.

The chain is Large ribosomal subunit protein bL17 from Pseudomonas syringae pv. syringae (strain B728a).